A 306-amino-acid polypeptide reads, in one-letter code: Palmitoyl-protein thioesterase ABHD10, mitochondrial (306 aa).

A mitochondrion-targeting transit peptide spans Met1–Lys52. Residues Ile78 to Thr177 form the AB hydrolase-1 domain. Catalysis depends on charge relay system residues Ser152, Asp249, and His279.

Belongs to the AB hydrolase superfamily.

The protein localises to the mitochondrion. It catalyses the reaction S-hexadecanoyl-L-cysteinyl-[protein] + H2O = L-cysteinyl-[protein] + hexadecanoate + H(+). The catalysed reaction is mycophenolic acid O-acyl-beta-D-glucuronide + H2O = mycophenolate + D-glucuronate + H(+). Its activity is regulated as follows. Inhibited by palmostatin-B. Acts as an acyl-protein thioesterase that hydrolyzes fatty acids from acylated residues in proteins. Regulates the mitochondrial S-depalmitoylation of the nucleophilic active site residue of peroxiredoxin-5/PRDX5, a key antioxidant protein, therefore modulating mitochondrial antioxidant ability. Also catalyzes the deglucuronidation of mycophenolic acid acyl-glucuronide, an active metabolite of the immunosuppressant drug mycophenolate. This chain is Palmitoyl-protein thioesterase ABHD10, mitochondrial (ABHD10), found in Pongo abelii (Sumatran orangutan).